An 87-amino-acid chain; its full sequence is U3-theraphotoxin-Hhn1a 5 (87 aa).

The first 24 residues, 1–24 (MVNMKASMFLTFAGLVLLFVVCYA), serve as a signal peptide directing secretion. A propeptide spanning residues 25–52 (SESEEKEFPKEMLSSIFAVDNDFKQEER) is cleaved from the precursor. Cystine bridges form between Cys54-Cys67, Cys61-Cys72, and Cys66-Cys79.

This sequence belongs to the neurotoxin 10 (Hwtx-1) family. 51 (Hntx-8) subfamily. Hntx-8 sub-subfamily. As to expression, expressed by the venom gland.

It localises to the secreted. Functionally, ion channel inhibitor. In Cyriopagopus hainanus (Chinese bird spider), this protein is U3-theraphotoxin-Hhn1a 5.